A 44-amino-acid polypeptide reads, in one-letter code: Photosystem I reaction center subunit IX (44 aa).

The chain crosses the membrane as a helical span at residues 7 to 27 (YLSVAPVASTLWFVALAGLLI).

Belongs to the PsaJ family.

The protein resides in the plastid. Its subcellular location is the chloroplast thylakoid membrane. Functionally, may help in the organization of the PsaE and PsaF subunits. The protein is Photosystem I reaction center subunit IX of Cicer arietinum (Chickpea).